The following is a 217-amino-acid chain: Somatotropin (217 aa).

The signal sequence occupies residues 1 to 26 (MATGSHTTTLLLAVALLGLPWPQEAG). Histidine 46 is a Zn(2+) binding site. A disulfide bridge connects residues cysteine 79 and cysteine 190. Zn(2+) is bound at residue glutamate 199. A disulfide bond links cysteine 207 and cysteine 215.

This sequence belongs to the somatotropin/prolactin family.

Its subcellular location is the secreted. Functionally, plays an important role in growth control. Its major role in stimulating body growth is to stimulate the liver and other tissues to secrete IGF1. It stimulates both the differentiation and proliferation of myoblasts. It also stimulates amino acid uptake and protein synthesis in muscle and other tissues. The chain is Somatotropin (GH1) from Galago senegalensis (Northern lesser bushbaby).